The chain runs to 655 residues: Katanin p80 WD40 repeat-containing subunit B1 (655 aa).

6 WD repeats span residues 18 to 58, 61 to 100, 103 to 142, 145 to 184, 187 to 226, and 229 to 269; these read AHGS…CIMS, GHTT…ILRT, GHKA…CVFR, GHTQ…MMAE, EHKG…LIGC, and GETI…DTVP. The interval 316 to 453 is disordered; the sequence is VPAEMPISQP…PVPAPQSKPP (138 aa). Over residues 358-374 the composition is skewed to basic and acidic residues; sequence KESRAEIQNPEDYKEIF. A compositionally biased stretch (polar residues) spans 415–426; it reads PATSNKNNTEQL.

Belongs to the WD repeat KATNB1 family. Interacts with katna1. This interaction enhances the microtubule binding and severing activity of katna1 and also targets this activity to the centrosome.

The protein resides in the cytoplasm. The protein localises to the cytoskeleton. It is found in the microtubule organizing center. It localises to the centrosome. Its subcellular location is the spindle pole. The protein resides in the spindle. Functionally, participates in a complex which severs microtubules in an ATP-dependent manner. May act to target the enzymatic subunit of this complex to sites of action such as the centrosome. Microtubule severing may promote rapid reorganization of cellular microtubule arrays and the release of microtubules from the centrosome following nucleation. The protein is Katanin p80 WD40 repeat-containing subunit B1 (katnb1) of Xenopus tropicalis (Western clawed frog).